The sequence spans 87 residues: Kappa-6-bungarotoxin (87 aa).

The signal sequence occupies residues 1 to 21; that stretch reads MKTLLLSLVVVTIVCLDLGYT. 5 disulfide bridges follow: Cys-24–Cys-42, Cys-35–Cys-63, Cys-48–Cys-52, Cys-67–Cys-79, and Cys-80–Cys-85.

The protein belongs to the three-finger toxin family. Long-chain subfamily. Kappa-neurotoxin sub-subfamily. In terms of assembly, homo- and heterodimer; non-covalently linked. Expressed by the venom gland.

The protein localises to the secreted. In terms of biological role, postsynaptic neurotoxin that binds and inhibits neuronal nicotinic acetylcholine receptors (nAChR) with high affinity (IC(50)&lt;100 nM). Is a selective, and slowly reversible antagonist of alpha-3/CHRNA3-containing and some alpha-4/CHRNA4-containing AChRs. The chain is Kappa-6-bungarotoxin from Bungarus multicinctus (Many-banded krait).